A 40-amino-acid polypeptide reads, in one-letter code: Antimicrobial peptide 2 (40 aa).

The Chitin-binding type-1 domain maps to 1–40; sequence AQCGAQGGGATCPGGLCCSQWGWCGSTPKYCGAGCQSNCR. Disulfide bonds link cysteine 3/cysteine 18, cysteine 12/cysteine 24, cysteine 17/cysteine 31, and cysteine 35/cysteine 39.

Post-translationally, not glycosylated.

Functionally, antimicrobial peptide active against plant pathogenic fungi and Gram-negative and -positive bacteria. The protein is Antimicrobial peptide 2 of Fagopyrum esculentum (Common buckwheat).